A 252-amino-acid polypeptide reads, in one-letter code: Triosephosphate isomerase (252 aa).

10 to 12 (NWK) lines the substrate pocket. Catalysis depends on H96, which acts as the Electrophile. E168 (proton acceptor) is an active-site residue. Substrate contacts are provided by residues G174, S213, and 234-235 (GG).

The protein belongs to the triosephosphate isomerase family. As to quaternary structure, homodimer.

Its subcellular location is the cytoplasm. The enzyme catalyses D-glyceraldehyde 3-phosphate = dihydroxyacetone phosphate. It functions in the pathway carbohydrate biosynthesis; gluconeogenesis. The protein operates within carbohydrate degradation; glycolysis; D-glyceraldehyde 3-phosphate from glycerone phosphate: step 1/1. In terms of biological role, involved in the gluconeogenesis. Catalyzes stereospecifically the conversion of dihydroxyacetone phosphate (DHAP) to D-glyceraldehyde-3-phosphate (G3P). This is Triosephosphate isomerase from Nitrosomonas eutropha (strain DSM 101675 / C91 / Nm57).